A 286-amino-acid polypeptide reads, in one-letter code: 4-diphosphocytidyl-2-C-methyl-D-erythritol kinase (286 aa).

The active site involves K11. P93 to S103 contributes to the ATP binding site. D135 is a catalytic residue.

It belongs to the GHMP kinase family. IspE subfamily.

It catalyses the reaction 4-CDP-2-C-methyl-D-erythritol + ATP = 4-CDP-2-C-methyl-D-erythritol 2-phosphate + ADP + H(+). Its pathway is isoprenoid biosynthesis; isopentenyl diphosphate biosynthesis via DXP pathway; isopentenyl diphosphate from 1-deoxy-D-xylulose 5-phosphate: step 3/6. Functionally, catalyzes the phosphorylation of the position 2 hydroxy group of 4-diphosphocytidyl-2C-methyl-D-erythritol. The chain is 4-diphosphocytidyl-2-C-methyl-D-erythritol kinase from Prosthecochloris aestuarii (strain DSM 271 / SK 413).